The following is a 527-amino-acid chain: Putative WEB family protein At4g17210 (527 aa).

2 disordered regions span residues 1–28 and 46–70; these read MAKIRTDAPVMPPETPPRSSEVGEIDTR and FSKKQPPRLSSSSSSQSQDTTTDVS. The span at 55 to 68 shows a compositional bias: low complexity; it reads SSSSSSQSQDTTTD. Coiled coils occupy residues 95-159, 202-389, and 436-513; these read AAKA…YILI, SNKI…AKHM, and KKIR…EAHS.

Belongs to the WEB family.

This is Putative WEB family protein At4g17210 from Arabidopsis thaliana (Mouse-ear cress).